A 365-amino-acid chain; its full sequence is Cytoplasmic tRNA 2-thiolation protein 1 (365 aa).

This sequence belongs to the TtcA family. CTU1/NCS6/ATPBD3 subfamily.

It is found in the cytoplasm. Its pathway is tRNA modification; 5-methoxycarbonylmethyl-2-thiouridine-tRNA biosynthesis. Its function is as follows. Plays a central role in 2-thiolation of mcm(5)S(2)U at tRNA wobble positions of tRNA(Lys), tRNA(Glu) and tRNA(Gln). Directly binds tRNAs and probably acts by catalyzing adenylation of tRNAs, an intermediate required for 2-thiolation. It is unclear whether it acts as a sulfurtransferase that transfers sulfur from thiocarboxylated URM1 onto the uridine of tRNAs at wobble position. Prior mcm(5) tRNA modification by the elongator complex is required for 2-thiolation. May also be involved in protein urmylation. This Yarrowia lipolytica (strain CLIB 122 / E 150) (Yeast) protein is Cytoplasmic tRNA 2-thiolation protein 1.